A 231-amino-acid chain; its full sequence is Large ribosomal subunit protein uL1 (231 aa).

It belongs to the universal ribosomal protein uL1 family. As to quaternary structure, part of the 50S ribosomal subunit.

Functionally, binds directly to 23S rRNA. The L1 stalk is quite mobile in the ribosome, and is involved in E site tRNA release. Its function is as follows. Protein L1 is also a translational repressor protein, it controls the translation of the L11 operon by binding to its mRNA. The chain is Large ribosomal subunit protein uL1 from Mycoplasmopsis synoviae (strain 53) (Mycoplasma synoviae).